The following is a 321-amino-acid chain: tRNA U34 carboxymethyltransferase (321 aa).

Residues Lys90, Trp104, Lys109, Gly129, 151 to 153 (DPT), 180 to 181 (IE), Met195, Tyr199, and Arg314 each bind carboxy-S-adenosyl-L-methionine.

Belongs to the class I-like SAM-binding methyltransferase superfamily. CmoB family. As to quaternary structure, homotetramer.

It carries out the reaction carboxy-S-adenosyl-L-methionine + 5-hydroxyuridine(34) in tRNA = 5-carboxymethoxyuridine(34) in tRNA + S-adenosyl-L-homocysteine + H(+). Its function is as follows. Catalyzes carboxymethyl transfer from carboxy-S-adenosyl-L-methionine (Cx-SAM) to 5-hydroxyuridine (ho5U) to form 5-carboxymethoxyuridine (cmo5U) at position 34 in tRNAs. In Haemophilus influenzae (strain PittGG), this protein is tRNA U34 carboxymethyltransferase.